The primary structure comprises 151 residues: Ubiquitin-conjugating enzyme E2 W (151 aa).

Residue Met1 forms a Peptide (Met-Gly) (interchain with G-Cter in ubiquitin) linkage. The 149-residue stretch at 3-151 folds into the UBC core domain; sequence SMQKRLQKEL…TKWWYHDDTC (149 aa). Catalysis depends on Cys91, which acts as the Glycyl thioester intermediate.

The protein belongs to the ubiquitin-conjugating enzyme family. As to quaternary structure, homodimer. Interacts with FANCL. Interacts with STUB1/CHIP. In terms of processing, ubiquitinated in vitro in the presence of FANCL. Autoubiquitinated at Met-1.

It localises to the nucleus. It carries out the reaction S-ubiquitinyl-[E1 ubiquitin-activating enzyme]-L-cysteine + [E2 ubiquitin-conjugating enzyme]-L-cysteine = [E1 ubiquitin-activating enzyme]-L-cysteine + S-ubiquitinyl-[E2 ubiquitin-conjugating enzyme]-L-cysteine.. The enzyme catalyses S-ubiquitinyl-[E1 ubiquitin-activating enzyme]-L-cysteine + [acceptor protein]-N-terminal-amino acid = [E1 ubiquitin-activating enzyme]-L-cysteine + N-terminal-ubiquitinyl-[acceptor protein].. Its pathway is protein modification; protein ubiquitination. Accepts ubiquitin from the E1 complex and catalyzes its covalent attachment to other proteins. Specifically monoubiquitinates the N-terminus of various substrates, including ATXN3, MAPT/TAU, POLR2H/RPB8 and STUB1/CHIP, by recognizing backbone atoms of disordered N-termini. Involved in degradation of misfolded chaperone substrates by mediating monoubiquitination of STUB1/CHIP, leading to recruitment of ATXN3 to monoubiquitinated STUB1/CHIP, and restriction of the length of ubiquitin chain attached to STUB1/CHIP substrates by ATXN3. After UV irradiation, but not after mitomycin-C (MMC) treatment, acts as a specific E2 ubiquitin-conjugating enzyme for the Fanconi anemia complex by associating with E3 ubiquitin-protein ligase FANCL and catalyzing monoubiquitination of FANCD2, a key step in the DNA damage pathway. In vitro catalyzes 'Lys-11'-linked polyubiquitination. UBE2W-catalyzed ubiquitination also occurs in the presence of inactive RING/U-box type E3s, i.e. lacking the active site cysteine residues to form thioester bonds with ubiquitin, or even in the absence of E3, albeit at a slower rate. The polypeptide is Ubiquitin-conjugating enzyme E2 W (UBE2W) (Bos taurus (Bovine)).